Reading from the N-terminus, the 280-residue chain is MRIIETIEEMKKFSEEMREKKKTIGFVPTMGYLHEGHLSLVRRARAENDVVVVSIFVNPTQFGPNEDYERYPRDFERDRKLLEKENVDCVFHPSVEEMYPPDFSTFVEETKLSKPLCGRSRPGHFRGVCTVVTKLFNIVKPHRAYFGQKDAQQFRVLRRMVRDLNMDVEMIECPIVREPDGLAMSSRNVYLTPEERKQALALYQSLKIAENLFLNGERDAVKIKEAMINHLSRFDRVKIDYVEIVDEETLEPVEKIDRKVIVAVAAWVGKARLIDNTILG.

30 to 37 (MGYLHEGH) serves as a coordination point for ATP. The active-site Proton donor is H37. Residue Q61 participates in (R)-pantoate binding. Q61 contributes to the beta-alanine binding site. 147-150 (GQKD) serves as a coordination point for ATP. Q153 provides a ligand contact to (R)-pantoate. Residues V176 and 184–187 (MSSR) each bind ATP.

It belongs to the pantothenate synthetase family. Homodimer.

The protein resides in the cytoplasm. It carries out the reaction (R)-pantoate + beta-alanine + ATP = (R)-pantothenate + AMP + diphosphate + H(+). It participates in cofactor biosynthesis; (R)-pantothenate biosynthesis; (R)-pantothenate from (R)-pantoate and beta-alanine: step 1/1. In terms of biological role, catalyzes the condensation of pantoate with beta-alanine in an ATP-dependent reaction via a pantoyl-adenylate intermediate. This chain is Pantothenate synthetase, found in Thermotoga neapolitana.